Here is a 396-residue protein sequence, read N- to C-terminus: Tyrosine--tRNA ligase (396 aa).

The 'HIGH' region signature appears at 43 to 52 (PTAPDIHLGH). A 'KMSKS' region motif is present at residues 227–231 (KMSKS). ATP is bound at residue K230. One can recognise an S4 RNA-binding domain in the interval 335–395 (IGLATLLKEA…GKRKFARVTV (61 aa)).

The protein belongs to the class-I aminoacyl-tRNA synthetase family. TyrS type 2 subfamily. In terms of assembly, homodimer.

The protein resides in the cytoplasm. The catalysed reaction is tRNA(Tyr) + L-tyrosine + ATP = L-tyrosyl-tRNA(Tyr) + AMP + diphosphate + H(+). Catalyzes the attachment of tyrosine to tRNA(Tyr) in a two-step reaction: tyrosine is first activated by ATP to form Tyr-AMP and then transferred to the acceptor end of tRNA(Tyr). In Haemophilus ducreyi (strain 35000HP / ATCC 700724), this protein is Tyrosine--tRNA ligase.